The following is a 397-amino-acid chain: HTH-type transcriptional regulator GalR (397 aa).

HTH lysR-type domains are found at residues proline 7 to threonine 64 and phenylalanine 99 to threonine 156. 2 consecutive DNA-binding regions (H-T-H motif) follow at residues valine 24–alanine 43 and methionine 116–lysine 135.

This sequence belongs to the LysR transcriptional regulatory family.

In terms of biological role, transcriptional regulator for the galBCD and galTAP operons, encoding genes of the gallate degradation pathway. This chain is HTH-type transcriptional regulator GalR (galR), found in Pseudomonas putida (strain ATCC 47054 / DSM 6125 / CFBP 8728 / NCIMB 11950 / KT2440).